The primary structure comprises 231 residues: Large ribosomal subunit protein uL1 (231 aa).

This sequence belongs to the universal ribosomal protein uL1 family. Part of the 50S ribosomal subunit.

In terms of biological role, binds directly to 23S rRNA. The L1 stalk is quite mobile in the ribosome, and is involved in E site tRNA release. Protein L1 is also a translational repressor protein, it controls the translation of the L11 operon by binding to its mRNA. This is Large ribosomal subunit protein uL1 from Pseudomonas savastanoi pv. phaseolicola (strain 1448A / Race 6) (Pseudomonas syringae pv. phaseolicola (strain 1448A / Race 6)).